A 412-amino-acid chain; its full sequence is Multifunctional CCA protein (412 aa).

Residues G8 and R11 each contribute to the ATP site. CTP contacts are provided by G8 and R11. Residues D21 and D23 each coordinate Mg(2+). 3 residues coordinate ATP: R91, R138, and R141. Residues R91, R138, and R141 each coordinate CTP. Residues 229–334 (RGQHTLLALQ…LELFNQLDVW (106 aa)) form the HD domain.

The protein belongs to the tRNA nucleotidyltransferase/poly(A) polymerase family. Bacterial CCA-adding enzyme type 1 subfamily. In terms of assembly, monomer. Can also form homodimers and oligomers. The cofactor is Mg(2+). Requires Ni(2+) as cofactor.

It carries out the reaction a tRNA precursor + 2 CTP + ATP = a tRNA with a 3' CCA end + 3 diphosphate. The enzyme catalyses a tRNA with a 3' CCA end + 2 CTP + ATP = a tRNA with a 3' CCACCA end + 3 diphosphate. Its function is as follows. Catalyzes the addition and repair of the essential 3'-terminal CCA sequence in tRNAs without using a nucleic acid template. Adds these three nucleotides in the order of C, C, and A to the tRNA nucleotide-73, using CTP and ATP as substrates and producing inorganic pyrophosphate. tRNA 3'-terminal CCA addition is required both for tRNA processing and repair. Also involved in tRNA surveillance by mediating tandem CCA addition to generate a CCACCA at the 3' terminus of unstable tRNAs. While stable tRNAs receive only 3'-terminal CCA, unstable tRNAs are marked with CCACCA and rapidly degraded. This is Multifunctional CCA protein from Haemophilus ducreyi (strain 35000HP / ATCC 700724).